Reading from the N-terminus, the 289-residue chain is ATP synthase subunit gamma, mitochondrial (289 aa).

This sequence belongs to the ATPase gamma chain family. In terms of assembly, F-type ATPases have 2 components, CF(1) - the catalytic core - and CF(0) - the membrane proton channel. CF(1) has five subunits: alpha(3), beta(3), gamma(1), delta(1), epsilon(1). CF(0) has three main subunits: a, b and c.

The protein localises to the mitochondrion. Its subcellular location is the mitochondrion inner membrane. In terms of biological role, mitochondrial membrane ATP synthase (F(1)F(0) ATP synthase or Complex V) produces ATP from ADP in the presence of a proton gradient across the membrane which is generated by electron transport complexes of the respiratory chain. F-type ATPases consist of two structural domains, F(1) - containing the extramembraneous catalytic core, and F(0) - containing the membrane proton channel, linked together by a central stalk and a peripheral stalk. During catalysis, ATP synthesis in the catalytic domain of F(1) is coupled via a rotary mechanism of the central stalk subunits to proton translocation. Part of the complex F(1) domain and the central stalk which is part of the complex rotary element. The gamma subunit protrudes into the catalytic domain formed of alpha(3)beta(3). Rotation of the central stalk against the surrounding alpha(3)beta(3) subunits leads to hydrolysis of ATP in three separate catalytic sites on the beta subunits. The sequence is that of ATP synthase subunit gamma, mitochondrial (ATP3) from Kluyveromyces lactis (strain ATCC 8585 / CBS 2359 / DSM 70799 / NBRC 1267 / NRRL Y-1140 / WM37) (Yeast).